The primary structure comprises 414 residues: Serpin A12 (414 aa).

The first 20 residues, 1-20 (MNPTLGLAIFLAVLLTVKGL), serve as a signal peptide directing secretion. N221 and N233 each carry an N-linked (GlcNAc...) (complex) asparagine glycan. N267 carries an N-linked (GlcNAc...) (high mannose) asparagine glycan. The interval 364 to 382 (GTEGAAGTGAQTLPMETPL) is reactive center loop.

This sequence belongs to the serpin family. As to quaternary structure, forms a stable complex with KLK7. In terms of processing, glycosylation slightly decreases affinity for heparin, but otherwise has no significant effect on KLK7 inhibitory activity or thermal stability of the protein. In terms of tissue distribution, expressed in visceral adipose tissues.

The protein localises to the secreted. Inhibition of KLK7 is enhanced by heparin. Adipokine that modulates insulin action by specifically inhibiting its target protease KLK7 in white adipose tissues. This Homo sapiens (Human) protein is Serpin A12 (SERPINA12).